Reading from the N-terminus, the 306-residue chain is Probable protein ABIL1 (306 aa).

Positions 200 to 236 are disordered; sequence KNSKTNGARQSEFVLEETKATKPASRGKEPSTSPLPK.

This sequence belongs to the ABI family. Binds SCAR.

It localises to the cytoplasm. It is found in the cytoskeleton. Its function is as follows. Involved in regulation of actin and microtubule organization. Part of a WAVE complex that activates the Arp2/3 complex. The polypeptide is Probable protein ABIL1 (Oryza sativa subsp. japonica (Rice)).